The sequence spans 226 residues: UPF0319 protein SO_1816 (226 aa).

An N-terminal signal peptide occupies residues methionine 1–alanine 21.

It belongs to the UPF0319 family.

The chain is UPF0319 protein SO_1816 from Shewanella oneidensis (strain ATCC 700550 / JCM 31522 / CIP 106686 / LMG 19005 / NCIMB 14063 / MR-1).